We begin with the raw amino-acid sequence, 170 residues long: RNA pyrophosphohydrolase (170 aa).

The region spanning 8 to 158 (PYRTCVGMML…KRPVYERVVK (151 aa)) is the Nudix hydrolase domain. The short motif at 46 to 67 (GGVDPGEDTWLAAKRELYEETS) is the Nudix box element.

Belongs to the Nudix hydrolase family. RppH subfamily. It depends on a divalent metal cation as a cofactor.

Functionally, accelerates the degradation of transcripts by removing pyrophosphate from the 5'-end of triphosphorylated RNA, leading to a more labile monophosphorylated state that can stimulate subsequent ribonuclease cleavage. The protein is RNA pyrophosphohydrolase of Nitrobacter winogradskyi (strain ATCC 25391 / DSM 10237 / CIP 104748 / NCIMB 11846 / Nb-255).